We begin with the raw amino-acid sequence, 316 residues long: Transaldolase (316 aa).

Lysine 132 functions as the Schiff-base intermediate with substrate in the catalytic mechanism.

This sequence belongs to the transaldolase family. Type 1 subfamily. As to quaternary structure, homodimer.

Its subcellular location is the cytoplasm. The catalysed reaction is D-sedoheptulose 7-phosphate + D-glyceraldehyde 3-phosphate = D-erythrose 4-phosphate + beta-D-fructose 6-phosphate. The protein operates within carbohydrate degradation; pentose phosphate pathway; D-glyceraldehyde 3-phosphate and beta-D-fructose 6-phosphate from D-ribose 5-phosphate and D-xylulose 5-phosphate (non-oxidative stage): step 2/3. In terms of biological role, transaldolase is important for the balance of metabolites in the pentose-phosphate pathway. The sequence is that of Transaldolase from Aliivibrio fischeri (strain ATCC 700601 / ES114) (Vibrio fischeri).